Consider the following 233-residue polypeptide: Sugar fermentation stimulation protein homolog (233 aa).

Belongs to the SfsA family.

The polypeptide is Sugar fermentation stimulation protein homolog (Acetivibrio thermocellus (strain ATCC 27405 / DSM 1237 / JCM 9322 / NBRC 103400 / NCIMB 10682 / NRRL B-4536 / VPI 7372) (Clostridium thermocellum)).